The primary structure comprises 287 residues: Very long chain fatty acid elongase 4 (287 aa).

3 consecutive transmembrane segments (helical) span residues 33–53 (ILVY…EHIM), 64–84 (PFVV…YSCV), and 115–135 (FWVF…VFLV). The HxxHH motif motif lies at 145 to 149 (HWYHH). His148 functions as the Nucleophile in the catalytic mechanism. 4 helical membrane passes run 150 to 170 (LTVA…GLWF), 172 to 192 (TMNY…ACGM), 199 to 219 (IAPF…LIVL), and 241 to 261 (LGLV…GKLY).

It belongs to the ELO family.

The protein resides in the membrane. The enzyme catalyses a very-long-chain acyl-CoA + malonyl-CoA + H(+) = a very-long-chain 3-oxoacyl-CoA + CO2 + CoA. Functionally, involved in the synthesis of fatty acids. Elongates C16:0 and C18:0 fatty acids to C26:0, with C24:0 being the main product. This chain is Very long chain fatty acid elongase 4, found in Trypanosoma cruzi (strain CL Brener).